Here is a 20-residue protein sequence, read N- to C-terminus: Dahlein-5.1 (20 aa).

Expressed by the skin dorsal glands.

It localises to the secreted. In terms of biological role, has no antimicrobial activity. Strongly inhibits the formation of NO by neuronal nitric oxide synthase at micromolar concentrations. Acts by a non-competitive mechanism, probably by binding to calcium/calmodulin and as a consequence blocking calmodulin attachment to nNOS. This is Dahlein-5.1 from Ranoidea dahlii (Dahl's aquatic frog).